A 458-amino-acid polypeptide reads, in one-letter code: E3 ubiquitin-protein ligase RNF25 (458 aa).

An RWD domain is found at 18–128; the sequence is SEVEVLESIY…EKGKEILTDN (111 aa). Zn(2+) is bound by residues Cys135, Cys138, Cys153, His155, Cys161, Cys197, and Cys200. The RING-type zinc-finger motif lies at 135 to 201; it reads CVICLYGFQE…AVGVQCPVCR (67 aa). Disordered regions lie at residues 267 to 299 and 317 to 458; these read PPAPLEPESAIDVSRGSHQPSTLATKPSTTSAT and KTPG…EDGS. Composition is skewed to polar residues over residues 282 to 299 and 362 to 372; these read GSHQPSTLATKPSTTSAT and LKGTSDTQKLQ. 2 stretches are compositionally biased toward basic and acidic residues: residues 377–388 and 412–423; these read PLKESMDLKPES and RTRDCAHWERAK. Positions 432–443 are enriched in low complexity; that stretch reads PRLPRGRGAYRP.

Belongs to the RNF25 family. As to quaternary structure, interacts with UBE2D2, and may also interact with UBE2E1 and UBE2E3. Interacts with RELA/p65. In terms of processing, ubiquitinated; autoubiquitinated.

It is found in the cytoplasm. It catalyses the reaction S-ubiquitinyl-[E2 ubiquitin-conjugating enzyme]-L-cysteine + [acceptor protein]-L-lysine = [E2 ubiquitin-conjugating enzyme]-L-cysteine + N(6)-ubiquitinyl-[acceptor protein]-L-lysine.. It functions in the pathway protein modification; protein ubiquitination. In terms of biological role, E3 ubiquitin-protein ligase that plays a key role in the RNF14-RNF25 translation quality control pathway, a pathway that takes place when a ribosome has stalled during translation, and which promotes ubiquitination and degradation of translation factors on stalled ribosomes. Catalyzes ubiquitination of RPS27A in response to ribosome collisions, promoting activation of RNF14. RNF25 catalyzes ubiquitination of other ribosomal proteins on stalled ribosomes, such as RPL0, RPL1, RPL12, RPS13 and RPS17. Also involved in ubiquitination and degradation of stalled ETF1/eRF1. Independently of its function in the response to stalled ribosomes, mediates ubiquitination and subsequent proteasomal degradation of NKD2. May also stimulate transcription mediated by NF-kappa-B via its interaction with RELA/p65. The chain is E3 ubiquitin-protein ligase RNF25 (RNF25) from Bos taurus (Bovine).